A 158-amino-acid chain; its full sequence is Transcription elongation factor GreA (158 aa).

A coiled-coil region spans residues 53–75 (AKERQGQVEATIGDLEDKLSRAQ).

This sequence belongs to the GreA/GreB family.

In terms of biological role, necessary for efficient RNA polymerase transcription elongation past template-encoded arresting sites. The arresting sites in DNA have the property of trapping a certain fraction of elongating RNA polymerases that pass through, resulting in locked ternary complexes. Cleavage of the nascent transcript by cleavage factors such as GreA or GreB allows the resumption of elongation from the new 3'terminus. GreA releases sequences of 2 to 3 nucleotides. The protein is Transcription elongation factor GreA of Sphingopyxis alaskensis (strain DSM 13593 / LMG 18877 / RB2256) (Sphingomonas alaskensis).